Reading from the N-terminus, the 3165-residue chain is Protein eyes shut homolog (3165 aa).

The N-terminal stretch at 1–21 (MTDKSIIILSLMVFHSSFING) is a signal peptide. 4 N-linked (GlcNAc...) asparagine glycosylation sites follow: asparagine 42, asparagine 105, asparagine 117, and asparagine 166. 3 consecutive EGF-like domains span residues 170-212 (KQQF…KYCQ), 213-254 (ELDA…KNCS), and 256-292 (IIVQ…PFCE). Cystine bridges form between cysteine 174–cysteine 189, cysteine 183–cysteine 200, cysteine 202–cysteine 211, cysteine 217–cysteine 228, cysteine 222–cysteine 242, cysteine 244–cysteine 253, cysteine 260–cysteine 270, cysteine 265–cysteine 280, and cysteine 282–cysteine 291. N-linked (GlcNAc...) asparagine glycosylation is found at asparagine 252, asparagine 269, and asparagine 272. Asparagine 311 and asparagine 343 each carry an N-linked (GlcNAc...) asparagine glycan. EGF-like domains are found at residues 332 to 368 (DVSE…LLCK) and 370 to 406 (FQTS…KNCE). Intrachain disulfides connect cysteine 341/cysteine 356 and cysteine 358/cysteine 367. Asparagine 382 carries N-linked (GlcNAc...) asparagine glycosylation. Residues cysteine 396 and cysteine 405 are joined by a disulfide bond. N-linked (GlcNAc...) asparagine glycosylation is found at asparagine 506, asparagine 520, asparagine 521, asparagine 566, and asparagine 573. EGF-like domains are found at residues 566-602 (NITD…RLCV), 604-641 (NVDY…NICE), and 643-679 (DIED…TRCE). 2 cysteine pairs are disulfide-bonded: cysteine 592/cysteine 601 and cysteine 608/cysteine 620. Residues asparagine 611 and asparagine 628 are each glycosylated (N-linked (GlcNAc...) asparagine). Cysteine 629 and cysteine 640 are disulfide-bonded. Asparagine 654 carries an N-linked (GlcNAc...) asparagine glycan. Disulfide bonds link cysteine 669–cysteine 678, cysteine 685–cysteine 696, cysteine 690–cysteine 705, and cysteine 707–cysteine 719. One can recognise an EGF-like 9; calcium-binding domain in the interval 681 to 720 (DLDECALHPCKSGATCIDQPGNYFCQCGPPFKVVDGFSCL). One can recognise an EGF-like 10 domain in the interval 733-769 (NIDNCILNAFEHNSTYKDLHLSYQCVCLSGWEGNFCE). Asparagine 745 carries an N-linked (GlcNAc...) asparagine glycan. Intrachain disulfides connect cysteine 759/cysteine 768, cysteine 775/cysteine 786, cysteine 780/cysteine 795, cysteine 797/cysteine 806, cysteine 813/cysteine 824, cysteine 818/cysteine 835, cysteine 837/cysteine 846, cysteine 853/cysteine 866, cysteine 860/cysteine 876, cysteine 878/cysteine 887, cysteine 894/cysteine 905, cysteine 899/cysteine 914, cysteine 916/cysteine 925, cysteine 932/cysteine 943, cysteine 937/cysteine 952, cysteine 954/cysteine 963, cysteine 970/cysteine 981, cysteine 975/cysteine 990, cysteine 992/cysteine 1001, cysteine 1008/cysteine 1019, cysteine 1013/cysteine 1028, cysteine 1030/cysteine 1039, cysteine 1046/cysteine 1056, cysteine 1051/cysteine 1065, cysteine 1067/cysteine 1076, cysteine 1083/cysteine 1094, cysteine 1088/cysteine 1103, cysteine 1105/cysteine 1114, cysteine 1121/cysteine 1137, cysteine 1131/cysteine 1147, cysteine 1149/cysteine 1158, cysteine 1165/cysteine 1176, cysteine 1170/cysteine 1185, and cysteine 1187/cysteine 1196. Positions 771-807 (ESNECKMNPCKNNSTCTDLYKSYRCECTSGWTGQNCS) constitute an EGF-like 11; calcium-binding domain. 3 N-linked (GlcNAc...) asparagine glycosylation sites follow: asparagine 782, asparagine 783, and asparagine 805. EGF-like domains follow at residues 809-847 (EINE…QFCH), 849-888 (RYNP…KHCE), and 890-926 (DVKE…SLCE). N-linked (GlcNAc...) asparagine glycans are attached at residues asparagine 862 and asparagine 863. Residues 928-964 (EINECSSEPCKNNGTCVDLTNRFFCNCEPGYHGPFCE) form the EGF-like 15; calcium-binding domain. N-linked (GlcNAc...) asparagine glycosylation is present at asparagine 940. The 37-residue stretch at 966–1002 (EVNKCKISPCLDEENCVYRTDRYNCLCAPGYTGINCE) folds into the EGF-like 16 domain. An EGF-like 17; calcium-binding domain is found at 1004-1040 (NLDECLSEPCLHDGVCIDGINHYTCDCKSGFFGTHCE). EGF-like domains are found at residues 1042-1077 (NAND…IQCK), 1079-1115 (KIND…AYCE), and 1117-1159 (SIDN…QFCE). Positions 1161–1197 (NINECSSSPCLHGANCEDHINGYVCKCQPGWSGHHCE) constitute an EGF-like 21; calcium-binding domain. Asparagine 1509, asparagine 1906, asparagine 1941, and asparagine 2033 each carry an N-linked (GlcNAc...) asparagine glycan. One can recognise a Laminin G-like 1 domain in the interval 1883–2063 (FSCVCYYGDS…AVRNYHINNC (181 aa)). Cystine bridges form between cysteine 2037–cysteine 2063, cysteine 2103–cysteine 2114, cysteine 2108–cysteine 2128, and cysteine 2130–cysteine 2139. In terms of domain architecture, EGF-like 22 spans 2099 to 2140 (APSVCQEDVCHNGGTCRPIFLSSGIVSFQCDCPLHFTGRFCE). The Laminin G-like 2 domain maps to 2145–2339 (LFFPSFSGNS…NIENCHVPWC (195 aa)). Residues asparagine 2170, asparagine 2185, and asparagine 2228 are each glycosylated (N-linked (GlcNAc...) asparagine). Disulfide bonds link cysteine 2308–cysteine 2339, cysteine 2339–cysteine 2350, cysteine 2344–cysteine 2359, cysteine 2375–cysteine 2386, cysteine 2380–cysteine 2396, and cysteine 2398–cysteine 2407. EGF-like domains are found at residues 2335-2368 (HVPW…YSGK) and 2371-2408 (QFAS…PLCT). N-linked (GlcNAc...) asparagine glycosylation occurs at asparagine 2347. Residues asparagine 2412, asparagine 2453, asparagine 2484, asparagine 2506, and asparagine 2532 are each glycosylated (N-linked (GlcNAc...) asparagine). The 191-residue stretch at 2419-2609 (SGTDAFGYTS…PNAGRSVGQC (191 aa)) folds into the Laminin G-like 3 domain. 3 cysteine pairs are disulfide-bonded: cysteine 2576–cysteine 2609, cysteine 2614–cysteine 2625, and cysteine 2619–cysteine 2634. 2 EGF-like domains span residues 2610–2646 (HASP…AFCT) and 2648–2689 (TVSI…IYCE). N-linked (GlcNAc...) asparagine glycosylation is present at asparagine 2635. Disulfide bonds link cysteine 2636/cysteine 2645, cysteine 2652/cysteine 2668, cysteine 2662/cysteine 2677, and cysteine 2679/cysteine 2688. The Laminin G-like 4 domain maps to 2717-2895 (DPSFRSSELS…AKGGSNVGDC (179 aa)). Residues asparagine 2775, asparagine 2800, and asparagine 2824 are each glycosylated (N-linked (GlcNAc...) asparagine). 4 disulfide bridges follow: cysteine 2868–cysteine 2895, cysteine 2900–cysteine 2911, cysteine 2905–cysteine 2920, and cysteine 2922–cysteine 2931. 2 consecutive EGF-like domains span residues 2896–2932 (DGTA…NICN) and 2933–2970 (QSAY…RYCE). The N-linked (GlcNAc...) asparagine glycan is linked to asparagine 2914. A glycan (N-linked (GlcNAc...) asparagine) is linked at asparagine 2932. Cystine bridges form between cysteine 2937/cysteine 2948, cysteine 2942/cysteine 2958, and cysteine 2960/cysteine 2969. 6 N-linked (GlcNAc...) asparagine glycosylation sites follow: asparagine 2971, asparagine 3006, asparagine 3036, asparagine 3057, asparagine 3073, and asparagine 3082. Positions 2975–3165 (FTTAKFMGNS…YDGDEQNEVT (191 aa)) constitute a Laminin G-like 5 domain.

The protein belongs to the EYS family. As to expression, expressed in retina (at protein level).

Its subcellular location is the cell projection. The protein resides in the cilium. It localises to the photoreceptor outer segment. The protein localises to the cytoplasm. It is found in the cytoskeleton. Its subcellular location is the cilium axoneme. The protein resides in the microtubule organizing center. It localises to the centrosome. The protein localises to the secreted. It is found in the extracellular space. Its subcellular location is the extracellular matrix. The protein resides in the interphotoreceptor matrix. In terms of biological role, required to maintain the integrity of photoreceptor cells. Specifically required for normal morphology of the photoreceptor ciliary pocket, and might thus facilitate protein trafficking between the photoreceptor inner and outer segments via the transition zone. The sequence is that of Protein eyes shut homolog from Macaca fascicularis (Crab-eating macaque).